A 465-amino-acid polypeptide reads, in one-letter code: Ribulose bisphosphate carboxylase large chain (465 aa).

K4 carries the N6,N6,N6-trimethyllysine modification. Residues N113 and T163 each contribute to the substrate site. The Proton acceptor role is filled by K165. K167 contacts substrate. K191, D193, and E194 together coordinate Mg(2+). Residue K191 is modified to N6-carboxylysine. H284 (proton acceptor) is an active-site residue. R285, H317, and S369 together coordinate substrate.

It belongs to the RuBisCO large chain family. Type I subfamily. In terms of assembly, heterohexadecamer of 8 large chains and 8 small chains; disulfide-linked. The disulfide link is formed within the large subunit homodimers. Mg(2+) serves as cofactor. In terms of processing, the disulfide bond which can form in the large chain dimeric partners within the hexadecamer appears to be associated with oxidative stress and protein turnover.

It is found in the plastid. The protein localises to the chloroplast. It catalyses the reaction 2 (2R)-3-phosphoglycerate + 2 H(+) = D-ribulose 1,5-bisphosphate + CO2 + H2O. The catalysed reaction is D-ribulose 1,5-bisphosphate + O2 = 2-phosphoglycolate + (2R)-3-phosphoglycerate + 2 H(+). In terms of biological role, ruBisCO catalyzes two reactions: the carboxylation of D-ribulose 1,5-bisphosphate, the primary event in carbon dioxide fixation, as well as the oxidative fragmentation of the pentose substrate in the photorespiration process. Both reactions occur simultaneously and in competition at the same active site. This chain is Ribulose bisphosphate carboxylase large chain, found in Acer saccharum (Sugar maple).